We begin with the raw amino-acid sequence, 449 residues long: Putative F-box/FBD/LRR-repeat protein At5g62970 (449 aa).

One can recognise an F-box domain in the interval 2–50 (DKISGFSDDELLVKILSFLPFKFAITTSVLSKQWKFLWMRVPKLEYDED). LRR repeat units lie at residues 27–52 (TTSV…EDSM), 81–107 (GHRM…RLKF), 158–185 (TLKL…HLER), 186–211 (VTYG…VVEL), 252–279 (YFKL…NITA), and 328–354 (IHNA…EFDE). The region spanning 368-418 (FWNQPNSVPQCLLSTLQTFEWSGYPGSVQGKDLATYILRKSRQLKIATISI) is the FBD domain.

The polypeptide is Putative F-box/FBD/LRR-repeat protein At5g62970 (Arabidopsis thaliana (Mouse-ear cress)).